A 492-amino-acid chain; its full sequence is MPKKAGKKAGGKLAGLTEEERLLYMQQKAQAEEEIAKRKEDMLTHFLKDKLQKEEKNTVLNLHKLRQQWRAVLTQTKIAELRNDMSVLSQTFERVLDYKDNIIRSLQVDLSERELQSELKRSSHLHNVDCLLEIHKSRLAQLEFNFKSSLVELSSEYNTEREQILSQHQQECVDLDNVMFSMEKHYSDLDGEAKRDYQSTRNQIKKRNFDDKQAVKEQMDGVVEKLWQDQQQVLNHYNESTRDKIITTDDLMNKDVQSAKEIDSLKKHIQKLQDSISTFRGQLSSGQTDKTAEQLRSERDELAQEVQHFRVQLNAAQAIRKKHITKLTVQSNDATKKLQEIVARGERLLRQCEMCCKLETEHEKVLPFYKSSLSEEEQKQEKAKAMESSNEKLTQLMHDYSPLAKFWQRYNKVELDCLCVKREKLLLLQENERLRLFLKQYLDEVSVSDESFRQQKLLVVSSPALQDTAATDRHQQKRHVVQEAACIVQKQL.

3 coiled-coil regions span residues 16-95 (LTEE…FERV), 256-318 (VQSA…AAQA), and 373-401 (LSEE…HDYS).

This sequence belongs to the DRC2 family. As to quaternary structure, component of the nexin-dynein regulatory complex (N-DRC).

Its subcellular location is the cytoplasm. The protein localises to the cytoskeleton. It localises to the flagellum basal body. It is found in the cell projection. The protein resides in the cilium. Its subcellular location is the flagellum. The protein localises to the flagellum axoneme. Component of the nexin-dynein regulatory complex (N-DRC), a key regulator of ciliary/flagellar motility which maintains the alignment and integrity of the distal axoneme and regulates microtubule sliding in motile axonemes. Plays a critical role in the assembly of N-DRC and also stabilizes the assembly of multiple inner dynein arms and radial spokes. Coassembles with DRC1 to form a central scaffold needed for assembly of the N-DRC and its attachment to the outer doublet microtubules. The protein is Dynein regulatory complex subunit 2 (ccdc65) of Danio rerio (Zebrafish).